We begin with the raw amino-acid sequence, 427 residues long: 3-isopropylmalate dehydratase large subunit (427 aa).

Positions 308, 368, and 371 each coordinate [4Fe-4S] cluster.

This sequence belongs to the aconitase/IPM isomerase family. LeuC type 2 subfamily. In terms of assembly, heterodimer of LeuC and LeuD. [4Fe-4S] cluster serves as cofactor.

It carries out the reaction (2R,3S)-3-isopropylmalate = (2S)-2-isopropylmalate. Its pathway is amino-acid biosynthesis; L-leucine biosynthesis; L-leucine from 3-methyl-2-oxobutanoate: step 2/4. Catalyzes the isomerization between 2-isopropylmalate and 3-isopropylmalate, via the formation of 2-isopropylmaleate. This Geobacter metallireducens (strain ATCC 53774 / DSM 7210 / GS-15) protein is 3-isopropylmalate dehydratase large subunit.